A 124-amino-acid polypeptide reads, in one-letter code: Small ribosomal subunit protein uS12cz/uS12cy (124 aa).

It belongs to the universal ribosomal protein uS12 family. As to quaternary structure, part of the 30S ribosomal subunit.

Its subcellular location is the plastid. The protein resides in the chloroplast. Functionally, with S4 and S5 plays an important role in translational accuracy. Located at the interface of the 30S and 50S subunits. The chain is Small ribosomal subunit protein uS12cz/uS12cy (rps12-A) from Zea mays (Maize).